The chain runs to 482 residues: 23S rRNA (uracil(1939)-C(5))-methyltransferase RlmD (482 aa).

Positions 85, 95, 98, and 177 each coordinate [4Fe-4S] cluster. 6 residues coordinate S-adenosyl-L-methionine: Q285, F314, N319, E335, N370, and D391. C438 functions as the Nucleophile in the catalytic mechanism.

The protein belongs to the class I-like SAM-binding methyltransferase superfamily. RNA M5U methyltransferase family. RlmD subfamily.

It catalyses the reaction uridine(1939) in 23S rRNA + S-adenosyl-L-methionine = 5-methyluridine(1939) in 23S rRNA + S-adenosyl-L-homocysteine + H(+). Its function is as follows. Catalyzes the formation of 5-methyl-uridine at position 1939 (m5U1939) in 23S rRNA. The sequence is that of 23S rRNA (uracil(1939)-C(5))-methyltransferase RlmD from Acidovorax sp. (strain JS42).